The chain runs to 708 residues: Ubiquitin thioesterase Zranb1 (708 aa).

A RanBP2-type 1 zinc finger spans residues 3–33; that stretch reads EHGIKWACEYCTYENWPSAIKCTMCRAQRPS. Residues Cys-10, Cys-13, Cys-24, and Cys-27 each coordinate Zn(2+). The segment at 38 to 73 is disordered; sequence TEDPFKSGSSDVGRDWDPSSTEGGSSPLICPDSSAR. 2 consecutive RanBP2-type zinc fingers follow at residues 84–113 and 149–178; these read NANK…QRRT and RTQH…PRPN. Residues Cys-90, Cys-93, Cys-104, Cys-107, Cys-155, Cys-158, Cys-169, and Cys-172 each coordinate Zn(2+). The interval 202–224 is disordered; that stretch reads RWRGGCSSGNSQRRSPPTTKRDS. Residues 209 to 219 are compositionally biased toward polar residues; the sequence is SGNSQRRSPPT. 2 ANK repeats span residues 260–290 and 313–340; these read KKTD…SGGD and YTLV…QQAA. The 161-residue stretch at 432-592 folds into the OTU domain; the sequence is LYALWNRTAG…RGHFSALVAM (161 aa). Cys-443 (nucleophile) is an active-site residue. The active-site Proton acceptor is His-585.

Belongs to the peptidase C64 family. As to quaternary structure, interacts with TRAF6. Interacts with APC.

It is found in the cytoplasm. It localises to the nucleus. It catalyses the reaction Thiol-dependent hydrolysis of ester, thioester, amide, peptide and isopeptide bonds formed by the C-terminal Gly of ubiquitin (a 76-residue protein attached to proteins as an intracellular targeting signal).. Its function is as follows. Ubiquitin thioesterase, which specifically hydrolyzes 'Lys-29'-linked and 'Lys-33'-linked diubiquitin. Also cleaves 'Lys-63'-linked chains, but with 40-fold less efficiency compared to 'Lys-29'-linked ones. Positive regulator of the Wnt signaling pathway that deubiquitinates APC protein, a negative regulator of Wnt-mediated transcription. Acts as a regulator of autophagy by mediating deubiquitination of PIK3C3/VPS34, thereby promoting autophagosome maturation. Plays a role in the regulation of cell morphology and cytoskeletal organization. Required in the stress fiber dynamics and cell migration. In Mus musculus (Mouse), this protein is Ubiquitin thioesterase Zranb1.